The sequence spans 326 residues: Vitamin B12 import system permease protein BtuC (326 aa).

9 helical membrane passes run 17–39 (LSLS…QWIA), 59–81 (RTLA…QALF), 88–107 (PGLL…AVLL), 111–133 (QLAG…LILL), 146–168 (LLAG…YFST), 188–205 (WQQS…IWIC), 242–264 (MVGV…PHIL), 274–296 (VLLP…VARL), and 303–322 (LPIG…WLLL).

Belongs to the binding-protein-dependent transport system permease family. FecCD subfamily. In terms of assembly, the complex is composed of two ATP-binding proteins (BtuD), two transmembrane proteins (BtuC) and a solute-binding protein (BtuF).

It localises to the cell inner membrane. Part of the ABC transporter complex BtuCDF involved in vitamin B12 import. Involved in the translocation of the substrate across the membrane. This chain is Vitamin B12 import system permease protein BtuC, found in Salmonella paratyphi A (strain ATCC 9150 / SARB42).